The sequence spans 730 residues: Synaptotagmin-like protein 5 (730 aa).

A RabBD domain is found at 7–123 (FINLSFLLDH…IITGEWFFEE (117 aa)). An FYVE-type zinc finger spans residues 64 to 106 (CVHCHRNLGLIFDRGDPCQACSLRVCRECRVAGPNGSWKCTVC). Ser147 carries the post-translational modification Phosphoserine. Disordered regions lie at residues 147–188 (SPGA…GFLL), 217–271 (QHFR…TRTV), and 294–355 (SQEL…LDKD). Composition is skewed to polar residues over residues 248 to 271 (PKSS…TRTV) and 305 to 322 (TSGT…SSDQ). C2 domains follow at residues 406–527 (VSGE…DEWF) and 563–694 (PPEQ…VDWM).

Binds RAB27A that has been activated by GTP-binding, and possibly also RAB3A and RAB6A. In terms of tissue distribution, highly expressed in placenta and liver.

It localises to the membrane. Its function is as follows. May act as Rab effector protein and play a role in vesicle trafficking. Binds phospholipids. The protein is Synaptotagmin-like protein 5 (SYTL5) of Homo sapiens (Human).